The following is a 130-amino-acid chain: MVRQSVLADCLNNIVNAERRGRRQVLIRPSSKVIVKFLTVMQKHGYIDEFTEIDDHRSGKIVIQLNGRINKCGVISPRFNVKLKDIEKWVNQLLPSRQVGVIVLTTSRGIMSHNEARAKDAGGKILGFFY.

It belongs to the universal ribosomal protein uS8 family. Component of the small ribosomal subunit (SSU). Mature yeast ribosomes consist of a small (40S) and a large (60S) subunit. The 40S small subunit contains 1 molecule of ribosomal RNA (18S rRNA) and at least 33 different proteins. The large 60S subunit contains 3 rRNA molecules (25S, 5.8S and 5S rRNA) and at least 46 different proteins.

The protein resides in the cytoplasm. It is found in the nucleus. Its function is as follows. Component of the ribosome, a large ribonucleoprotein complex responsible for the synthesis of proteins in the cell. The small ribosomal subunit (SSU) binds messenger RNAs (mRNAs) and translates the encoded message by selecting cognate aminoacyl-transfer RNA (tRNA) molecules. The large subunit (LSU) contains the ribosomal catalytic site termed the peptidyl transferase center (PTC), which catalyzes the formation of peptide bonds, thereby polymerizing the amino acids delivered by tRNAs into a polypeptide chain. The nascent polypeptides leave the ribosome through a tunnel in the LSU and interact with protein factors that function in enzymatic processing, targeting, and the membrane insertion of nascent chains at the exit of the ribosomal tunnel. This chain is Small ribosomal subunit protein uS8A (rps2201), found in Schizosaccharomyces pombe (strain 972 / ATCC 24843) (Fission yeast).